The chain runs to 529 residues: Biotin-dependent 3-methylcrotonyl-coenzyme A carboxylase beta1 subunit (529 aa).

Residues 16-272 (HRRLVAELNN…CEPAQWDVRR (257 aa)) form the CoA carboxyltransferase N-terminal domain. The CoA carboxyltransferase C-terminal domain occupies 275–521 (EPKYPQAELY…SLCAHAPLDQ (247 aa)).

The protein belongs to the AccD/PCCB family. The biotin-dependent acyl-CoA carboxylase complex is composed of AccA1, which contains the biotin carboxylase (BC) and biotin carboxyl carrier protein (BCCP) domains, and AccD1, which contains the carboxyl transferase (CT) domain. The AccA1/AccD1 complex forms a dodecamer.

The enzyme catalyses 3-methylbut-2-enoyl-CoA + N(6)-carboxybiotinyl-L-lysyl-[protein] = 3-methyl-(2E)-glutaconyl-CoA + N(6)-biotinyl-L-lysyl-[protein]. It functions in the pathway amino-acid degradation; L-leucine degradation. Component of a biotin-dependent acyl-CoA carboxylase complex. This subunit transfers the CO2 from carboxybiotin to the CoA ester substrate. When associated with the alpha1 subunit AccA1, is involved in branched amino-acid catabolism with methylcrotonyl coenzyme A as the substrate. Shows residual with propionyl-CoA and acetyl-CoA. The chain is Biotin-dependent 3-methylcrotonyl-coenzyme A carboxylase beta1 subunit from Mycobacterium tuberculosis (strain ATCC 25618 / H37Rv).